The chain runs to 332 residues: UPF0194 membrane protein YbhG (332 aa).

The N-terminal stretch at 1–16 (MMKKPVVIGLAVVVLA) is a signal peptide. Residues 108–209 (EEIAQAAAAV…LNLQDSTLIA (102 aa)) adopt a coiled-coil conformation.

The protein belongs to the UPF0194 family.

It is found in the periplasm. The sequence is that of UPF0194 membrane protein YbhG from Escherichia coli O127:H6 (strain E2348/69 / EPEC).